Here is a 1117-residue protein sequence, read N- to C-terminus: Centrosomal protein of 126 kDa (1117 aa).

Residues 1–42 are disordered; it reads MLAGRPGTRSAVGELGTESSDNLDRAPLGPRESGGHHRPGSY. Residues 49–121 adopt a coiled-coil conformation; that stretch reads LEKNLEEERQ…EEVTEKFQRA (73 aa). Disordered regions lie at residues 643 to 664 and 730 to 759; these read AENSHSLKNKTGTTQQHSQQFH and KKEESKIPVHDDSKTKQGKPQRGRAKIIRK. Residues 730 to 744 are compositionally biased toward basic and acidic residues; that stretch reads KKEESKIPVHDDSKT. The span at 745-758 shows a compositional bias: basic residues; it reads KQGKPQRGRAKIIR.

In terms of assembly, interacts with DCTN1. Expressed in brain, lung, skeletal muscle, kidney, pancreas, testis and ovary.

The protein resides in the midbody. The protein localises to the cytoplasm. Its subcellular location is the cytoskeleton. It localises to the microtubule organizing center. It is found in the centrosome. The protein resides in the cilium basal body. In terms of biological role, participates in cytokinesis. Necessary for microtubules and mitotic spindle organization. Involved in primary cilium formation. The chain is Centrosomal protein of 126 kDa from Homo sapiens (Human).